A 76-amino-acid polypeptide reads, in one-letter code: Small ribosomal subunit protein bS18 (76 aa).

This sequence belongs to the bacterial ribosomal protein bS18 family. In terms of assembly, part of the 30S ribosomal subunit. Forms a tight heterodimer with protein bS6.

Its function is as follows. Binds as a heterodimer with protein bS6 to the central domain of the 16S rRNA, where it helps stabilize the platform of the 30S subunit. In Ectopseudomonas mendocina (strain ymp) (Pseudomonas mendocina), this protein is Small ribosomal subunit protein bS18.